The sequence spans 259 residues: Ribosomal RNA small subunit methyltransferase J (259 aa).

Residues 101–102, 117–118, 153–154, and Asp-176 contribute to the S-adenosyl-L-methionine site; these read RD, ER, and SS.

This sequence belongs to the methyltransferase superfamily. RsmJ family.

The protein localises to the cytoplasm. It catalyses the reaction guanosine(1516) in 16S rRNA + S-adenosyl-L-methionine = N(2)-methylguanosine(1516) in 16S rRNA + S-adenosyl-L-homocysteine + H(+). In terms of biological role, specifically methylates the guanosine in position 1516 of 16S rRNA. The chain is Ribosomal RNA small subunit methyltransferase J from Vibrio vulnificus (strain YJ016).